The chain runs to 402 residues: Serine/threonine-protein phosphatase 4 regulatory subunit 2 (402 aa).

Acidic residues predominate over residues 206 to 248 (MDEEFEDEDYEDHEDEEEDEEDEDNDSDVDEMEAEEVEEDASD). Disordered stretches follow at residues 206-270 (MDEE…DVTD), 291-311 (SVLS…ILSR), and 331-402 (GFIT…KKRM). Residues 348–358 (SSSSMVSPVVS) show a composition bias toward low complexity. Polar residues predominate over residues 371–396 (INTFISPDTTNSVTQAEKNELSTSPL).

Belongs to the PPP4R2 family. As to quaternary structure, regulatory subunit (R2) of the histone H2A phosphatase complex (HTP-C) consisting of PPH3, PSY2 and PSY4.

It localises to the nucleus. Regulatory subunit of the histone H2A phosphatase complex, which dephosphorylates H2AS128ph (gamma-H2A) that has been displaced from sites of DNA lesions in the double-stranded DNA break repair process. Dephosphorylation is necessary for efficient recovery from the DNA damage checkpoint. In Kluyveromyces lactis (strain ATCC 8585 / CBS 2359 / DSM 70799 / NBRC 1267 / NRRL Y-1140 / WM37) (Yeast), this protein is Serine/threonine-protein phosphatase 4 regulatory subunit 2 (PSY4).